The primary structure comprises 501 residues: Envelope glycoprotein C homolog (501 aa).

An N-terminal signal peptide occupies residues 1-27; sequence MLTPRVLRALGWTGLFFLLLSPSNVLG. Over 28 to 465 the chain is Virion surface; it reads ASLSRDLETP…DATPSARGTP (438 aa). An N-linked (GlcNAc...) asparagine; by host glycan is attached at Asn46. The tract at residues 53–86 is disordered; it reads PLTEVPHAPSTESVSTNSESTNEHTITETTGKNA. Positions 62–72 are enriched in low complexity; the sequence is STESVSTNSES. 7 N-linked (GlcNAc...) asparagine; by host glycosylation sites follow: Asn91, Asn100, Asn120, Asn212, Asn354, Asn400, and Asn429. Residues 258-356 form the Ig-like domain; that stretch reads PASVDVLAPP…GDMISTTNAT (99 aa). Residues 466 to 492 form a helical membrane-spanning segment; it reads MVITVTAVLGLAVILGMGIIMTALCLY. Residues 493–501 lie on the Cytoplasmic side of the membrane; the sequence is NSTRKNIRL.

Belongs to the herpesviridae glycoprotein C family.

It is found in the secreted. The protein localises to the host cell membrane. Functionally, may play an immunoevasive role in the pathogenesis of Marek's disease. It is a candidate for causing the early-stage immunosuppression that occurs after MDHV infection. The polypeptide is Envelope glycoprotein C homolog (gC) (Gallus gallus (Chicken)).